A 542-amino-acid chain; its full sequence is DNA-binding protein modulo (542 aa).

Residues 1–166 (MAQKKAVTVK…RGIPKVKVGK (166 aa)) are disordered. Residues serine 42 and serine 44 each carry the phosphoserine modification. A compositionally biased stretch (acidic residues) spans 59 to 114 (SEEDESDVEEQNDEQPGDDSDFETEEAAGLIDDEAEEDEEYNSDDEEDDDDDELEP). Phosphoserine occurs at positions 120, 129, and 142. Acidic residues predominate over residues 123 to 135 (ADEVDESDDDEEA). The segment covering 136-158 (PVEKPVSKKSEKANSEKSEENRG) has biased composition (basic and acidic residues). RRM domains follow at residues 175-251 (QIVF…QPRN), 258-331 (RTVV…RISQ), 340-429 (LTLV…NLTS), and 420-489 (RAIL…PNSL). Position 304 is a phosphoserine (serine 304). The residue at position 330 (serine 330) is a Phosphoserine; by PKA. Serine 443 is modified (phosphoserine). Positions 505–542 (RAPRKFQKDTKPNFGKKPFNKRPAQENGGKSFVKRARF) are disordered.

Post-translationally, the N-terminus is blocked.

It is found in the nucleus. Its function is as follows. Its capacity to bind DNA and protein(s), and its differential expression during development suggest a role in the regulation of gene expression during Drosophila development. It could, in interaction with other factors, be required for the translation of instructions provided by pattern forming genes and controls, via chromatin changes, the activity of genes critical for the process of morphogenesis of several embryonic territories. This Drosophila melanogaster (Fruit fly) protein is DNA-binding protein modulo (mod).